The chain runs to 76 residues: Small ribosomal subunit protein uS17 (76 aa).

This sequence belongs to the universal ribosomal protein uS17 family. In terms of assembly, part of the 30S ribosomal subunit.

Its function is as follows. One of the primary rRNA binding proteins, it binds specifically to the 5'-end of 16S ribosomal RNA. In Dinoroseobacter shibae (strain DSM 16493 / NCIMB 14021 / DFL 12), this protein is Small ribosomal subunit protein uS17.